The primary structure comprises 323 residues: Elongation factor P--(R)-beta-lysine ligase (323 aa).

76–78 (SPE) contributes to the substrate binding site. Residues 100-102 (RNE) and Asn109 contribute to the ATP site. Tyr118 serves as a coordination point for substrate. Residue 242–243 (EL) coordinates ATP. Glu249 is a binding site for substrate. Gly298 is an ATP binding site.

It belongs to the class-II aminoacyl-tRNA synthetase family. EpmA subfamily. In terms of assembly, homodimer.

The catalysed reaction is D-beta-lysine + L-lysyl-[protein] + ATP = N(6)-((3R)-3,6-diaminohexanoyl)-L-lysyl-[protein] + AMP + diphosphate + H(+). In terms of biological role, with EpmB is involved in the beta-lysylation step of the post-translational modification of translation elongation factor P (EF-P). Catalyzes the ATP-dependent activation of (R)-beta-lysine produced by EpmB, forming a lysyl-adenylate, from which the beta-lysyl moiety is then transferred to the epsilon-amino group of a conserved specific lysine residue in EF-P. The polypeptide is Elongation factor P--(R)-beta-lysine ligase (Haemophilus influenzae (strain PittGG)).